The following is a 176-amino-acid chain: Large ribosomal subunit protein uL10 (176 aa).

The protein belongs to the universal ribosomal protein uL10 family. As to quaternary structure, part of the ribosomal stalk of the 50S ribosomal subunit. The N-terminus interacts with L11 and the large rRNA to form the base of the stalk. The C-terminus forms an elongated spine to which L12 dimers bind in a sequential fashion forming a multimeric L10(L12)X complex.

Its function is as follows. Forms part of the ribosomal stalk, playing a central role in the interaction of the ribosome with GTP-bound translation factors. This is Large ribosomal subunit protein uL10 from Alcanivorax borkumensis (strain ATCC 700651 / DSM 11573 / NCIMB 13689 / SK2).